A 341-amino-acid chain; its full sequence is L-threonine 3-dehydrogenase (341 aa).

Cysteine 38 is a Zn(2+) binding site. Residues threonine 40 and histidine 43 each act as charge relay system in the active site. Histidine 63, glutamate 64, cysteine 93, cysteine 96, cysteine 99, and cysteine 107 together coordinate Zn(2+). Residues isoleucine 175, aspartate 195, arginine 200, 262–264 (LGI), and 286–287 (IY) each bind NAD(+).

It belongs to the zinc-containing alcohol dehydrogenase family. In terms of assembly, homotetramer. Requires Zn(2+) as cofactor.

The protein localises to the cytoplasm. The catalysed reaction is L-threonine + NAD(+) = (2S)-2-amino-3-oxobutanoate + NADH + H(+). The protein operates within amino-acid degradation; L-threonine degradation via oxydo-reductase pathway; glycine from L-threonine: step 1/2. In terms of biological role, catalyzes the NAD(+)-dependent oxidation of L-threonine to 2-amino-3-ketobutyrate. The protein is L-threonine 3-dehydrogenase of Escherichia coli O17:K52:H18 (strain UMN026 / ExPEC).